The following is a 138-amino-acid chain: Small ribosomal subunit protein uS11c (138 aa).

The tract at residues 1–22 (MAKPIPRIGSQRNRRINSRKNA) is disordered. The segment covering 12–22 (RNRRINSRKNA) has biased composition (basic residues).

The protein belongs to the universal ribosomal protein uS11 family. As to quaternary structure, part of the 30S ribosomal subunit.

Its subcellular location is the plastid. The protein localises to the chloroplast. The sequence is that of Small ribosomal subunit protein uS11c from Fagopyrum esculentum subsp. ancestrale (Wild buckwheat).